The sequence spans 402 residues: Putative F-box/kelch-repeat protein At1g61540 (402 aa).

The 47-residue stretch at 24–70 (PISIMSLPYDLLLNCFSLVSRLYYPTLSLVSKTFRSIITSRELYEIR) folds into the F-box domain. 3 Kelch repeats span residues 135–189 (NIYK…CEVD), 191–240 (KIYI…EVKS), and 246–293 (KIYM…VVDN).

This Arabidopsis thaliana (Mouse-ear cress) protein is Putative F-box/kelch-repeat protein At1g61540.